A 370-amino-acid polypeptide reads, in one-letter code: Glutathione S-transferase omega-like 2 (370 aa).

Position 15 (arginine 15) interacts with glutathione. Catalysis depends on cysteine 46, which acts as the Nucleophile. Tryptophan 79, arginine 155, valine 158, glutamate 173, and serine 174 together coordinate glutathione. The 153-residue stretch at 201–353 (PAQLKTQIDD…LHYTRSHTRI (153 aa)) folds into the GST C-terminal domain.

This sequence belongs to the GST superfamily. Omega family. In terms of assembly, homodimer.

The protein resides in the cytoplasm. The catalysed reaction is RX + glutathione = an S-substituted glutathione + a halide anion + H(+). It catalyses the reaction L-dehydroascorbate + 2 glutathione = glutathione disulfide + L-ascorbate. Functionally, active as '1-Cys' thiol transferase against beta-hydroxyethyl disulfide (HED), as dehydroascorbate reductase and as dimethylarsinic acid reductase, while not active against the standard GST substrate 1-chloro-2,4-dinitrobenzene (CDNB). May be involved in cell wall organization and biogenesis. This chain is Glutathione S-transferase omega-like 2, found in Saccharomyces cerevisiae (strain ATCC 204508 / S288c) (Baker's yeast).